We begin with the raw amino-acid sequence, 190 residues long: Dual specificity protein phosphatase 21 (190 aa).

The Tyrosine-protein phosphatase domain maps to 21–162 (SFSQITRSLF…LINYEFKLFN (142 aa)). The tract at residues 43–128 (LSSNRITAIV…AYLMKYHSMS (86 aa)) is sufficient for mitochondrial localization. The active-site Phosphocysteine intermediate is C106.

Belongs to the protein-tyrosine phosphatase family. Non-receptor class dual specificity subfamily. As to quaternary structure, microtubule inner protein component of sperm flagellar doublet microtubules. Expressed in testis.

Its subcellular location is the cytoplasm. It is found in the nucleus. It localises to the mitochondrion inner membrane. The protein localises to the cytoskeleton. The protein resides in the flagellum axoneme. The enzyme catalyses O-phospho-L-tyrosyl-[protein] + H2O = L-tyrosyl-[protein] + phosphate. The catalysed reaction is O-phospho-L-seryl-[protein] + H2O = L-seryl-[protein] + phosphate. It catalyses the reaction O-phospho-L-threonyl-[protein] + H2O = L-threonyl-[protein] + phosphate. Its function is as follows. Protein phosphatase component of the sperm flagellar doublet microtubules. May act as a regulator of sperm motility by mediating dephosphorylation of sperm doublet microtubule proteins. Can dephosphorylate single and diphosphorylated synthetic MAPK peptides, with preference for the phosphotyrosine and diphosphorylated forms over phosphothreonine. This is Dual specificity protein phosphatase 21 (DUSP21) from Homo sapiens (Human).